The sequence spans 319 residues: Acetyl-coenzyme A carboxylase carboxyl transferase subunit beta (319 aa).

One can recognise a CoA carboxyltransferase N-terminal domain in the interval 24-293; sequence LWIKCPDTGQ…MIEQEPEPSA (270 aa). The tract at residues 282–319 is disordered; the sequence is PEMIEQEPEPSAPVPPDEPDEPAATQEAPPAAPAAPPA.

This sequence belongs to the AccD/PCCB family. As to quaternary structure, acetyl-CoA carboxylase is a heterohexamer composed of biotin carboxyl carrier protein (AccB), biotin carboxylase (AccC) and two subunits each of ACCase subunit alpha (AccA) and ACCase subunit beta (AccD).

It localises to the cytoplasm. It catalyses the reaction N(6)-carboxybiotinyl-L-lysyl-[protein] + acetyl-CoA = N(6)-biotinyl-L-lysyl-[protein] + malonyl-CoA. It participates in lipid metabolism; malonyl-CoA biosynthesis; malonyl-CoA from acetyl-CoA: step 1/1. Functionally, component of the acetyl coenzyme A carboxylase (ACC) complex. Biotin carboxylase (BC) catalyzes the carboxylation of biotin on its carrier protein (BCCP) and then the CO(2) group is transferred by the transcarboxylase to acetyl-CoA to form malonyl-CoA. The protein is Acetyl-coenzyme A carboxylase carboxyl transferase subunit beta of Nitrobacter winogradskyi (strain ATCC 25391 / DSM 10237 / CIP 104748 / NCIMB 11846 / Nb-255).